The sequence spans 415 residues: Multidrug resistance protein MdtA (415 aa).

An N-terminal signal peptide occupies residues 1–21 (MKGSYKSRWVIVIVVVIAAIA). Disordered stretches follow at residues 32 to 59 (SRSA…SGPL) and 392 to 415 (EAQS…GARS). The segment covering 399–415 (SEEKATSREYAKKGARS) has biased composition (basic and acidic residues).

The protein belongs to the membrane fusion protein (MFP) (TC 8.A.1) family. In terms of assembly, part of a tripartite efflux system composed of MdtA, MdtB and MdtC.

The protein resides in the cell inner membrane. Functionally, the MdtABC tripartite complex confers resistance against novobiocin and deoxycholate. This chain is Multidrug resistance protein MdtA, found in Escherichia coli (strain SMS-3-5 / SECEC).